We begin with the raw amino-acid sequence, 333 residues long: MITPSSSQSLGMKVQMESEQSPKLQEELDRSPSSVDGSAIRNGTDMQTESPAEATSSPVEVAEDPGANLFPPPLPQPRICMWKYLDIHSMHRLEKAATVEKMREVLAELLELGFPEQSLRDAIILDLFSHALIFCRQQGFSPEQTSAACAMLQDLHKACVATPLGNVEECYRYFTSVLFCHGIRRPPFSIDLFKEEQLLALADYVVNTYFRHFKLYKYVFTPQVRLDLSLTYTGLQPLTLWPEEKENEEMMVVEQVATPQEEEPETVTEPEQQPSEVCILQTYIKSQLSKELRQLQQLVEERLKESEERLSSKLAALEQPFQTPPSKGKTKTK.

The segment covering 1–10 (MITPSSSQSL) has biased composition (polar residues). Disordered stretches follow at residues 1-70 (MITP…ANLF) and 309-333 (RLSS…TKTK). Ser-34 is subject to Phosphoserine. A compositionally biased stretch (polar residues) spans 44–58 (TDMQTESPAEATSSP). Residues 284-319 (IKSQLSKELRQLQQLVEERLKESEERLSSKLAALEQ) are a coiled coil.

It localises to the cell projection. The protein resides in the cilium. The protein localises to the flagellum. It is found in the cytoplasmic vesicle. Its subcellular location is the secretory vesicle. It localises to the acrosome. The protein resides in the cytoplasm. This Mus musculus (Mouse) protein is Cilia- and flagella-associated protein 119.